The primary structure comprises 369 residues: Flagellar P-ring protein 2 (369 aa).

An N-terminal signal peptide occupies residues 1 to 24; the sequence is MCAFAAILSLLSVLLMATSRSSDA.

Belongs to the FlgI family. As to quaternary structure, the basal body constitutes a major portion of the flagellar organelle and consists of four rings (L,P,S, and M) mounted on a central rod.

It is found in the periplasm. The protein localises to the bacterial flagellum basal body. Its function is as follows. Assembles around the rod to form the L-ring and probably protects the motor/basal body from shearing forces during rotation. This Burkholderia thailandensis (strain ATCC 700388 / DSM 13276 / CCUG 48851 / CIP 106301 / E264) protein is Flagellar P-ring protein 2.